Here is a 767-residue protein sequence, read N- to C-terminus: ATPase family gene 2 protein homolog B (767 aa).

Met-1 is subject to N-acetylmethionine. ATP-binding positions include 241 to 248 (GPPGVGKT) and 507 to 514 (GPPGCAKT).

It belongs to the AAA ATPase family. AFG2 subfamily. Part of the 55LCC heterohexameric ATPase complex composed at least of AIRIM, AFG2A, AFG2B and CINP. Associates with pre-60S ribosomal particles.

Its subcellular location is the cytoplasm. The protein localises to the cytoskeleton. It localises to the spindle. It is found in the nucleus. It carries out the reaction ATP + H2O = ADP + phosphate + H(+). Its activity is regulated as follows. In the context of 55LCC heterohexameric ATPase complex, the ATPase activity is stimulated by DNA binding and inhibited in presence of RNA. Functionally, ATP-dependent chaperone part of the 55LCC heterohexameric ATPase complex which is chromatin-associated and promotes replisome proteostasis to maintain replication fork progression and genome stability. Required for replication fork progression, sister chromatid cohesion, and chromosome stability. The ATPase activity is specifically enhanced by replication fork DNA and is coupled to cysteine protease-dependent cleavage of replisome substrates in response to replication fork damage. Uses ATPase activity to process replisome substrates in S-phase, facilitating their proteolytic turnover from chromatin to ensure DNA replication and mitotic fidelity. Plays an essential role in the cytoplasmic maturation steps of pre-60S ribosomal particles by promoting the release of shuttling protein RSL24D1/RLP24 from the pre-ribosomal particles. The protein is ATPase family gene 2 protein homolog B (AFG2B) of Bos taurus (Bovine).